The sequence spans 212 residues: Cyclin-dependent kinase inhibitor 3 (212 aa).

Over residues 1-12 the composition is skewed to polar residues; the sequence is MKPPSSIQTSEF. The disordered stretch occupies residues 1 to 20; the sequence is MKPPSSIQTSEFDSSDEEPI. Positions 1-34 are interaction with CDK2; that stretch reads MKPPSSIQTSEFDSSDEEPIEDEQTPIHISWLSL. The 169-residue stretch at 33 to 201 folds into the Tyrosine-protein phosphatase domain; the sequence is SLSRVNCSQF…FRDKLAAHLS (169 aa). Cys140 acts as the Phosphocysteine intermediate in catalysis.

This sequence belongs to the protein-tyrosine phosphatase family. Interacts with cyclin-dependent kinases such as CDK1, CDK2 and CDK3. Does not interact with CDK4. Interacts (via C-terminus) with phosphorylated CDK2 (via C-terminal helix). Interacts with MS4A3 (via C-terminus); the interaction enhances CDKN3 enzymatic activity.

It is found in the cytoplasm. The protein resides in the perinuclear region. It carries out the reaction O-phospho-L-tyrosyl-[protein] + H2O = L-tyrosyl-[protein] + phosphate. The catalysed reaction is O-phospho-L-threonyl-[protein] + H2O = L-threonyl-[protein] + phosphate. It catalyses the reaction O-phospho-L-seryl-[protein] + H2O = L-seryl-[protein] + phosphate. May play a role in cell cycle regulation. Dual specificity CC phosphatase active toward substrates containing either phosphotyrosine or phosphoserine residues. Dephosphorylates CDK2 at 'Thr-160' in a cyclin-dependent manner. This is Cyclin-dependent kinase inhibitor 3 from Homo sapiens (Human).